Reading from the N-terminus, the 374-residue chain is Putative phosphoserine aminotransferase (374 aa).

Residue arginine 48 participates in L-glutamate binding. Pyridoxal 5'-phosphate-binding positions include 82–83 (AT), phenylalanine 106, threonine 152, aspartate 174, and glutamine 197. Residue lysine 198 is modified to N6-(pyridoxal phosphate)lysine. 249-250 (NT) contacts pyridoxal 5'-phosphate.

This sequence belongs to the class-V pyridoxal-phosphate-dependent aminotransferase family. SerC subfamily. In terms of assembly, homodimer. The cofactor is pyridoxal 5'-phosphate.

It localises to the cytoplasm. It carries out the reaction O-phospho-L-serine + 2-oxoglutarate = 3-phosphooxypyruvate + L-glutamate. The enzyme catalyses 4-(phosphooxy)-L-threonine + 2-oxoglutarate = (R)-3-hydroxy-2-oxo-4-phosphooxybutanoate + L-glutamate. It participates in amino-acid biosynthesis; L-serine biosynthesis; L-serine from 3-phospho-D-glycerate: step 2/3. The protein operates within cofactor biosynthesis; pyridoxine 5'-phosphate biosynthesis; pyridoxine 5'-phosphate from D-erythrose 4-phosphate: step 3/5. Functionally, catalyzes the reversible conversion of 3-phosphohydroxypyruvate to phosphoserine and of 3-hydroxy-2-oxo-4-phosphonooxybutanoate to phosphohydroxythreonine. This Mycobacterium avium (strain 104) protein is Putative phosphoserine aminotransferase.